We begin with the raw amino-acid sequence, 291 residues long: ATP synthase gamma chain (291 aa).

Belongs to the ATPase gamma chain family. F-type ATPases have 2 components, CF(1) - the catalytic core - and CF(0) - the membrane proton channel. CF(1) has five subunits: alpha(3), beta(3), gamma(1), delta(1), epsilon(1). CF(0) has three main subunits: a, b and c.

It is found in the cell inner membrane. In terms of biological role, produces ATP from ADP in the presence of a proton gradient across the membrane. The gamma chain is believed to be important in regulating ATPase activity and the flow of protons through the CF(0) complex. In Neisseria meningitidis serogroup A / serotype 4A (strain DSM 15465 / Z2491), this protein is ATP synthase gamma chain.